A 276-amino-acid polypeptide reads, in one-letter code: Shikimate dehydrogenase (NADP(+)) (276 aa).

Residues 15–17 (SMS) and threonine 63 each bind shikimate. Lysine 67 serves as the catalytic Proton acceptor. Position 79 (aspartate 79) interacts with NADP(+). Shikimate contacts are provided by asparagine 88 and aspartate 103. NADP(+) is bound by residues 130–134 (GAGGA), 154–159 (NRTLSR), and isoleucine 217. Residue tyrosine 219 participates in shikimate binding. Glycine 240 is a binding site for NADP(+).

It belongs to the shikimate dehydrogenase family. As to quaternary structure, homodimer.

It carries out the reaction shikimate + NADP(+) = 3-dehydroshikimate + NADPH + H(+). It participates in metabolic intermediate biosynthesis; chorismate biosynthesis; chorismate from D-erythrose 4-phosphate and phosphoenolpyruvate: step 4/7. In terms of biological role, involved in the biosynthesis of the chorismate, which leads to the biosynthesis of aromatic amino acids. Catalyzes the reversible NADPH linked reduction of 3-dehydroshikimate (DHSA) to yield shikimate (SA). This chain is Shikimate dehydrogenase (NADP(+)), found in Oceanobacillus iheyensis (strain DSM 14371 / CIP 107618 / JCM 11309 / KCTC 3954 / HTE831).